The chain runs to 139 residues: Small ribosomal subunit protein uS11 (139 aa).

The segment at 117-139 (VEDVTPIPHDGTRPKGGRRGRRV) is disordered.

This sequence belongs to the universal ribosomal protein uS11 family. As to quaternary structure, part of the 30S ribosomal subunit.

In terms of biological role, located on the platform of the 30S subunit. The chain is Small ribosomal subunit protein uS11 from Thermococcus onnurineus (strain NA1).